The primary structure comprises 197 residues: MLTQSLFLTVLTLALSLVSKTSASQCSPRYGTCGGIYYDGPTCCVVGSSCIYSNPWYSQCIPVDYTGPCAKLYQQCGGINYNGPTCCEPGSECIYNGPYYSQCIPVDIDPSSSSSSAASSTTSTTSSSSLVSSTTLTSSSPSAVSSTTSIPSISSTISSSVSTSSFTSLSSSGFSTVLSSTNTTSALPSSGWNVTGY.

The N-terminal stretch at 1–23 (MLTQSLFLTVLTLALSLVSKTSA) is a signal peptide. CBM1 domains follow at residues 25–61 (QCSPRYGTCGGIYYDGPTCCVVGSSCIYSNPWYSQCI) and 68–104 (PCAKLYQQCGGINYNGPTCCEPGSECIYNGPYYSQCI). 4 disulfides stabilise this stretch: Cys-33–Cys-50, Cys-44–Cys-60, Cys-76–Cys-93, and Cys-87–Cys-103. The interval 115–163 (SSAASSTTSTTSSSSLVSSTTLTSSSPSAVSSTTSIPSISSTISSSVST) is disordered. Asn-182 and Asn-193 each carry an N-linked (GlcNAc...) asparagine glycan.

It is found in the secreted. The polypeptide is Carbohydrate-binding domain-containing protein C2E1P3.05c (Schizosaccharomyces pombe (strain 972 / ATCC 24843) (Fission yeast)).